Here is a 202-residue protein sequence, read N- to C-terminus: FMN-dependent NADH:quinone oxidoreductase 1 (202 aa).

Residues Ser-9, 15–17 (SAS), 95–98 (MYNF), and 139–142 (TSGG) contribute to the FMN site.

This sequence belongs to the azoreductase type 1 family. Homodimer. FMN serves as cofactor.

The enzyme catalyses 2 a quinone + NADH + H(+) = 2 a 1,4-benzosemiquinone + NAD(+). It carries out the reaction N,N-dimethyl-1,4-phenylenediamine + anthranilate + 2 NAD(+) = 2-(4-dimethylaminophenyl)diazenylbenzoate + 2 NADH + 2 H(+). In terms of biological role, quinone reductase that provides resistance to thiol-specific stress caused by electrophilic quinones. Functionally, also exhibits azoreductase activity. Catalyzes the reductive cleavage of the azo bond in aromatic azo compounds to the corresponding amines. This chain is FMN-dependent NADH:quinone oxidoreductase 1, found in Pseudomonas syringae pv. tomato (strain ATCC BAA-871 / DC3000).